The sequence spans 157 residues: ATP synthase subunit b (157 aa).

The chain crosses the membrane as a helical span at residues 7–29 (LVSQAIAFSIFIWFTTKFVWPYL).

Belongs to the ATPase B chain family. As to quaternary structure, F-type ATPases have 2 components, F(1) - the catalytic core - and F(0) - the membrane proton channel. F(1) has five subunits: alpha(3), beta(3), gamma(1), delta(1), epsilon(1). F(0) has three main subunits: a(1), b(2) and c(10-14). The alpha and beta chains form an alternating ring which encloses part of the gamma chain. F(1) is attached to F(0) by a central stalk formed by the gamma and epsilon chains, while a peripheral stalk is formed by the delta and b chains.

The protein resides in the cell inner membrane. Its function is as follows. F(1)F(0) ATP synthase produces ATP from ADP in the presence of a proton or sodium gradient. F-type ATPases consist of two structural domains, F(1) containing the extramembraneous catalytic core and F(0) containing the membrane proton channel, linked together by a central stalk and a peripheral stalk. During catalysis, ATP synthesis in the catalytic domain of F(1) is coupled via a rotary mechanism of the central stalk subunits to proton translocation. Functionally, component of the F(0) channel, it forms part of the peripheral stalk, linking F(1) to F(0). In Nitrosomonas eutropha (strain DSM 101675 / C91 / Nm57), this protein is ATP synthase subunit b.